The sequence spans 561 residues: MNINVAELLNGNYILLLFVVLTLGLCLGKLRLGSIQLGNSIGVLVVSLLLGQQHFSINTDALNLGFMLFIFCVGVEAGPNFFSIFFRDGKNYLMLALVMVGSALVIALGLGKLFGWDIGLTAGMLAGSMTSTPVLVGAGDTLRHSGMESRQLSLALDNLSLGYALTYLIGLVSLIVGARYLPKLQHQDLQTSAQQIARERGLDTDANRKVYLPVIRAYRVGPELVAWTDGKNLRELGIYRQTGCYIERIRRNGILANPDGDAVLQMGDEIALVGYPDAHARLDPSFRNGKEVFDRDLLDMRIVTEEVVVKNHNAVGKRLAQLKLTDHGCFLNRVIRSQIEMPIDDNVVLNKGDVLQVSGDARRVKTIADRIGFISIHSQVTDLLAFCAFFVIGLMIGMITFQFSTFSFGMGNAAGLLFAGIMLGFMRANHPTFGYIPQGALSMVKEFGLMVFMAGVGLSAGSGINNGLGAIGGQMLIAGLIVSLVPVVICFLFGAYVLRMNRALLFGAMMGARTCAPAMEIISDTARSNIPALGYAGTYAIANVLLTLAGTIIVMVWPGLG.

5 helical membrane-spanning segments follow: residues 8–28, 32–52, 66–86, 94–114, and 158–178; these read LLNGNYILLLFVVLTLGLCLG, LGSIQLGNSIGVLVVSLLLGQ, FMLFIFCVGVEAGPNFFSIFF, MLALVMVGSALVIALGLGKLF, and NLSLGYALTYLIGLVSLIVGA. RCK C-terminal domains are found at residues 200–288 and 292–373; these read RGLD…SFRN and VFDR…RIGF. The next 5 membrane-spanning stretches (helical) occupy residues 383–403, 406–426, 451–471, 475–495, and 540–560; these read LLAFCAFFVIGLMIGMITFQF, FSFGMGNAAGLLFAGIMLGFM, VFMAGVGLSAGSGINNGLGAI, MLIAGLIVSLVPVVICFLFGA, and AIANVLLTLAGTIIVMVWPGL.

It belongs to the AAE transporter (TC 2.A.81) family. YbjL subfamily.

The protein resides in the cell membrane. The sequence is that of Putative transport protein YbjL from Shigella sonnei (strain Ss046).